A 410-amino-acid polypeptide reads, in one-letter code: Auxin-induced protein 5NG4 (410 aa).

Residues 1-16 are Cytoplasmic-facing; sequence MASNIMQRCNVFMSER. The helical transmembrane segment at 17 to 37 threads the bilayer; it reads VKLHAAMLALQFGYAGFHIVS. The Extracellular segment spans residues 38 to 47; it reads RAALNMGVSK. The helical transmembrane segment at 48 to 68 threads the bilayer; that stretch reads VVFPVYRNILALMLIGPCAYF. The Cytoplasmic portion of the chain corresponds to 69–74; the sequence is LEKKER. A helical membrane pass occupies residues 75 to 95; that stretch reads PALTLSFLIQFFLLALCGITG. The Extracellular portion of the chain corresponds to 96 to 109; that stretch reads QSRILSLRIVLHIP. Residues 110–130 form a helical membrane-spanning segment; it reads TFASAIQNSVPAITFIMAAAL. Over 131-141 the chain is Cytoplasmic; sequence RLEKVHISRRD. Residues 142–162 form a helical membrane-spanning segment; that stretch reads GLAKIIGTVACVSGATIITLY. At 163–196 the chain is on the extracellular side; it reads KGPPITHIWRPNLEVTASYFKAFQGNDLSAKSEN. The N-linked (GlcNAc...) asparagine glycan is linked to N196. Residues 197–217 form a helical membrane-spanning segment; that stretch reads WTLGCIYLLGNCLAWSGWIVL. Residues 209–338 enclose the EamA domain; it reads LAWSGWIVLQ…IIIGLYLVLW (130 aa). The Cytoplasmic segment spans residues 218 to 229; the sequence is QAPVLKRYPARL. Residues 230–250 form a helical membrane-spanning segment; it reads SVTSFTCFFGVIQFLIIAAFF. Over 251–264 the chain is Extracellular; it reads ETDLEHWKIHSGGE. Residues 265–285 form a helical membrane-spanning segment; it reads LFTILYAGFVASGIAFSVQIW. At 286-292 the chain is on the cytoplasmic side; it reads CIDRGGP. A helical transmembrane segment spans residues 293 to 313; the sequence is VFVAVYQPVQTIAVAIMASII. Residues 314–317 lie on the Extracellular side of the membrane; sequence LGEQ. A helical transmembrane segment spans residues 318-338; sequence FYLGGIFGAILIIIGLYLVLW. The Cytoplasmic segment spans residues 339-410; it reads GKSEEKRLGL…IPSPSDEPQP (72 aa).

The protein belongs to the drug/metabolite transporter (DMT) superfamily. Plant drug/metabolite exporter (P-DME) (TC 2.A.7.4) family.

The protein localises to the membrane. In Pinus taeda (Loblolly pine), this protein is Auxin-induced protein 5NG4.